A 209-amino-acid chain; its full sequence is Large ribosomal subunit protein uL3 (209 aa).

Residues 127 to 147 are disordered; it reads YSRGPMGHGSKSHRVAGARSA.

The protein belongs to the universal ribosomal protein uL3 family. In terms of assembly, part of the 50S ribosomal subunit. Forms a cluster with proteins L14 and L19.

Its function is as follows. One of the primary rRNA binding proteins, it binds directly near the 3'-end of the 23S rRNA, where it nucleates assembly of the 50S subunit. The sequence is that of Large ribosomal subunit protein uL3 from Finegoldia magna (strain ATCC 29328 / DSM 20472 / WAL 2508) (Peptostreptococcus magnus).